The following is a 206-amino-acid chain: dTTP/UTP pyrophosphatase (206 aa).

Residue D79 is the Proton acceptor of the active site.

The protein belongs to the Maf family. YhdE subfamily. It depends on a divalent metal cation as a cofactor.

It localises to the cytoplasm. It catalyses the reaction dTTP + H2O = dTMP + diphosphate + H(+). It carries out the reaction UTP + H2O = UMP + diphosphate + H(+). Nucleoside triphosphate pyrophosphatase that hydrolyzes dTTP and UTP. May have a dual role in cell division arrest and in preventing the incorporation of modified nucleotides into cellular nucleic acids. The protein is dTTP/UTP pyrophosphatase of Rhizobium johnstonii (strain DSM 114642 / LMG 32736 / 3841) (Rhizobium leguminosarum bv. viciae).